Reading from the N-terminus, the 223-residue chain is Ribose-5-phosphate isomerase A (223 aa).

Substrate-binding positions include 26 to 29 (TGST), 82 to 85 (DGAD), and 95 to 98 (KGGG). E104 serves as the catalytic Proton acceptor. Position 122 (K122) interacts with substrate.

It belongs to the ribose 5-phosphate isomerase family. Homodimer.

The catalysed reaction is aldehydo-D-ribose 5-phosphate = D-ribulose 5-phosphate. It participates in carbohydrate degradation; pentose phosphate pathway; D-ribose 5-phosphate from D-ribulose 5-phosphate (non-oxidative stage): step 1/1. Its function is as follows. Catalyzes the reversible conversion of ribose-5-phosphate to ribulose 5-phosphate. The sequence is that of Ribose-5-phosphate isomerase A from Streptococcus agalactiae serotype III (strain NEM316).